Reading from the N-terminus, the 214-residue chain is Transmembrane emp24 domain-containing protein p24beta3 (214 aa).

An N-terminal signal peptide occupies residues 1 to 27 (MERRQAKIHVFVLIGLILLNSINQISS). Residues 28–178 (LSVTVNDEEC…RHTNESTRKR (151 aa)) lie on the Lumenal side of the membrane. Residues 35 to 122 (EECVQEYVLY…PETVSFYIHV (88 aa)) enclose the GOLD domain. A coiled-coil region spans residues 140–158 (VNVKIAELREALESVVAEQ). An omega-N-methylated arginine mark is found at arginine 164 and arginine 169. A glycan (N-linked (GlcNAc...) asparagine) is linked at asparagine 172. Residues 179–199 (VIFYTVGEYIFLAAASGLQVL) form a helical membrane-spanning segment. The Cytoplasmic portion of the chain corresponds to 200-214 (YIRKLFSKSVAYNRV). Positions 204–205 (LF) match the COPII vesicle coat-binding motif. A COPI vesicle coat-binding motif is present at residues 204–214 (LFSKSVAYNRV). The Required for the export from the endoplasmic reticulum to the Golgi signature appears at 213 to 214 (RV).

Belongs to the EMP24/GP25L family. As to quaternary structure, probably oligomerizes with other members of the EMP24/GP25L family. Associates with the COPI vesicle coat (coatomer). Associates with the COPII vesicle coat (coatomer).

The protein resides in the golgi apparatus. Its subcellular location is the cis-Golgi network membrane. The protein localises to the golgi stack membrane. Functionally, involved in vesicular protein trafficking. Mainly functions in the early secretory pathway but also in post-Golgi membranes. Thought to act as cargo receptor at the lumenal side for incorporation of secretory cargo molecules into transport vesicles and to be involved in vesicle coat formation at the cytoplasmic side. This is Transmembrane emp24 domain-containing protein p24beta3 from Arabidopsis thaliana (Mouse-ear cress).